The chain runs to 844 residues: Aminopeptidase N (844 aa).

Substrate-binding positions include E120 and 253 to 257; that span reads GAMEN. H289 is a Zn(2+) binding site. The active-site Proton acceptor is the E290. Zn(2+)-binding residues include H293 and E312.

This sequence belongs to the peptidase M1 family. In terms of assembly, monomer. It depends on Zn(2+) as a cofactor.

The protein resides in the cytoplasm. It carries out the reaction Release of an N-terminal amino acid, Xaa-|-Yaa- from a peptide, amide or arylamide. Xaa is preferably Ala, but may be most amino acids including Pro (slow action). When a terminal hydrophobic residue is followed by a prolyl residue, the two may be released as an intact Xaa-Pro dipeptide.. In terms of biological role, aminopeptidase N is involved in the degradation of intracellular peptides generated by protein breakdown during normal growth as well as in response to nutrient starvation. This Lactobacillus helveticus (Lactobacillus suntoryeus) protein is Aminopeptidase N (pepN).